A 123-amino-acid chain; its full sequence is Urotensin-2 (123 aa).

Positions 1 to 20 (MDRVPFCCLLFIGLLNPLLS) are cleaved as a signal peptide. Propeptides lie at residues 21–104 (LPVT…LART) and 107–109 (QHK). Residues 57–88 (RQTMGTEAGESPGEAGPSTETPTPRGSMRKAF) form a disordered region. The cysteines at positions 117 and 122 are disulfide-linked.

The protein belongs to the urotensin-2 family. In terms of tissue distribution, brain specific. Predominantly expressed in motoneurons of the brainstem and spinal cord.

It is found in the secreted. In terms of biological role, highly potent vasoconstrictor. In Mus musculus (Mouse), this protein is Urotensin-2 (Uts2).